Consider the following 571-residue polypeptide: Sulfite reductase [NADPH] hemoprotein beta-component (571 aa).

[4Fe-4S] cluster-binding residues include Cys-435, Cys-441, Cys-480, and Cys-484. Position 484 (Cys-484) interacts with siroheme.

The protein belongs to the nitrite and sulfite reductase 4Fe-4S domain family. As to quaternary structure, alpha(8)-beta(8). The alpha component is a flavoprotein, the beta component is a hemoprotein. Siroheme is required as a cofactor. [4Fe-4S] cluster serves as cofactor.

It catalyses the reaction hydrogen sulfide + 3 NADP(+) + 3 H2O = sulfite + 3 NADPH + 4 H(+). Its pathway is sulfur metabolism; hydrogen sulfide biosynthesis; hydrogen sulfide from sulfite (NADPH route): step 1/1. Its function is as follows. Component of the sulfite reductase complex that catalyzes the 6-electron reduction of sulfite to sulfide. This is one of several activities required for the biosynthesis of L-cysteine from sulfate. In Serratia proteamaculans (strain 568), this protein is Sulfite reductase [NADPH] hemoprotein beta-component.